The sequence spans 249 residues: Tetrahydromethanopterin S-methyltransferase subunit A (249 aa).

Topologically, residues 1-227 (MADKKEVIQN…KISSGYYAGK (227 aa)) are cytoplasmic. His-84 lines the 5-hydroxybenzimidazolylcob(I)amide pocket. The chain crosses the membrane as a helical span at residues 228 to 248 (IEGIVIGFILTLVFLIIIIQG). Leu-249 is a topological domain (extracellular).

Belongs to the MtrA family. The complex is composed of 8 subunits; MtrA, MtrB, MtrC, MtrD, MtrE, MtrF, MtrG and MtrH. 5-hydroxybenzimidazolylcob(I)amide serves as cofactor.

It localises to the cell membrane. The catalysed reaction is 5-methyl-5,6,7,8-tetrahydromethanopterin + coenzyme M + 2 Na(+)(in) = 5,6,7,8-tetrahydromethanopterin + methyl-coenzyme M + 2 Na(+)(out). Its pathway is one-carbon metabolism; methanogenesis from CO(2); methyl-coenzyme M from 5,10-methylene-5,6,7,8-tetrahydromethanopterin: step 2/2. Its function is as follows. Part of a complex that catalyzes the formation of methyl-coenzyme M and tetrahydromethanopterin from coenzyme M and methyl-tetrahydromethanopterin. This is an energy-conserving, sodium-ion translocating step. This chain is Tetrahydromethanopterin S-methyltransferase subunit A, found in Methanosphaera stadtmanae (strain ATCC 43021 / DSM 3091 / JCM 11832 / MCB-3).